The chain runs to 283 residues: Probable endonuclease 4 (283 aa).

Residues histidine 69, histidine 109, glutamate 145, aspartate 179, histidine 182, histidine 216, aspartate 229, histidine 231, and glutamate 261 each contribute to the Zn(2+) site.

Belongs to the AP endonuclease 2 family. It depends on Zn(2+) as a cofactor.

It catalyses the reaction Endonucleolytic cleavage to 5'-phosphooligonucleotide end-products.. In terms of biological role, endonuclease IV plays a role in DNA repair. It cleaves phosphodiester bonds at apurinic or apyrimidinic (AP) sites, generating a 3'-hydroxyl group and a 5'-terminal sugar phosphate. The protein is Probable endonuclease 4 of Desulfosudis oleivorans (strain DSM 6200 / JCM 39069 / Hxd3) (Desulfococcus oleovorans).